Consider the following 336-residue polypeptide: Ketol-acid reductoisomerase (NADP(+)) (336 aa).

Positions 1-182 (MAVIYYDKDA…GVTRAGVIET (182 aa)) constitute a KARI N-terminal Rossmann domain. NADP(+) contacts are provided by residues 25–28 (YGSQ), Arg-48, Ser-51, Ser-53, and 83–86 (DENQ). The active site involves His-108. Position 134 (Gly-134) interacts with NADP(+). One can recognise a KARI C-terminal knotted domain in the interval 183-328 (TFKEETETDL…KELRKMMPWL (146 aa)). Positions 191, 195, 227, and 231 each coordinate Mg(2+). Ser-252 provides a ligand contact to substrate.

Belongs to the ketol-acid reductoisomerase family. The cofactor is Mg(2+).

It carries out the reaction (2R)-2,3-dihydroxy-3-methylbutanoate + NADP(+) = (2S)-2-acetolactate + NADPH + H(+). The catalysed reaction is (2R,3R)-2,3-dihydroxy-3-methylpentanoate + NADP(+) = (S)-2-ethyl-2-hydroxy-3-oxobutanoate + NADPH + H(+). The protein operates within amino-acid biosynthesis; L-isoleucine biosynthesis; L-isoleucine from 2-oxobutanoate: step 2/4. It functions in the pathway amino-acid biosynthesis; L-valine biosynthesis; L-valine from pyruvate: step 2/4. Its function is as follows. Involved in the biosynthesis of branched-chain amino acids (BCAA). Catalyzes an alkyl-migration followed by a ketol-acid reduction of (S)-2-acetolactate (S2AL) to yield (R)-2,3-dihydroxy-isovalerate. In the isomerase reaction, S2AL is rearranged via a Mg-dependent methyl migration to produce 3-hydroxy-3-methyl-2-ketobutyrate (HMKB). In the reductase reaction, this 2-ketoacid undergoes a metal-dependent reduction by NADPH to yield (R)-2,3-dihydroxy-isovalerate. The chain is Ketol-acid reductoisomerase (NADP(+)) from Thermotoga petrophila (strain ATCC BAA-488 / DSM 13995 / JCM 10881 / RKU-1).